The primary structure comprises 40 residues: Photosystem II reaction center protein J (40 aa).

Residues 8–28 (IPLWLIGTVTGIPVIGLVGIF) traverse the membrane as a helical segment.

The protein belongs to the PsbJ family. As to quaternary structure, PSII is composed of 1 copy each of membrane proteins PsbA, PsbB, PsbC, PsbD, PsbE, PsbF, PsbH, PsbI, PsbJ, PsbK, PsbL, PsbM, PsbT, PsbX, PsbY, PsbZ, Psb30/Ycf12, at least 3 peripheral proteins of the oxygen-evolving complex and a large number of cofactors. It forms dimeric complexes.

Its subcellular location is the plastid. The protein resides in the chloroplast thylakoid membrane. In terms of biological role, one of the components of the core complex of photosystem II (PSII). PSII is a light-driven water:plastoquinone oxidoreductase that uses light energy to abstract electrons from H(2)O, generating O(2) and a proton gradient subsequently used for ATP formation. It consists of a core antenna complex that captures photons, and an electron transfer chain that converts photonic excitation into a charge separation. This is Photosystem II reaction center protein J from Cucumis sativus (Cucumber).